A 346-amino-acid polypeptide reads, in one-letter code: [LysW]-lysine/[LysW]-ornithine hydrolase (346 aa).

Histidine 68 is a Zn(2+) binding site. The active site involves aspartate 70. Aspartate 92 lines the Zn(2+) pocket. The active-site Proton acceptor is the glutamate 122. Positions 123, 146, and 317 each coordinate Zn(2+).

The protein belongs to the peptidase M20A family. LysK subfamily. It depends on Zn(2+) as a cofactor. Requires Co(2+) as cofactor.

The protein resides in the cytoplasm. It catalyses the reaction [amino-group carrier protein]-C-terminal-gamma-(L-lysyl)-L-glutamate + H2O = [amino-group carrier protein]-C-terminal-L-glutamate + L-lysine. It carries out the reaction [amino-group carrier protein]-C-terminal-gamma-(L-ornithyl)-L-glutamate + H2O = [amino-group carrier protein]-C-terminal-L-glutamate + L-ornithine. Its pathway is amino-acid biosynthesis; L-lysine biosynthesis via AAA pathway; L-lysine from L-alpha-aminoadipate (Thermus route): step 5/5. It functions in the pathway amino-acid biosynthesis; L-arginine biosynthesis. In terms of biological role, catalyzes the release of L-lysine from [LysW]-gamma-L-lysine and the release of L-ornithine from [LysW]-L-ornithine. This chain is [LysW]-lysine/[LysW]-ornithine hydrolase, found in Saccharolobus solfataricus (strain ATCC 35092 / DSM 1617 / JCM 11322 / P2) (Sulfolobus solfataricus).